The chain runs to 31 residues: Cytochrome b6-f complex subunit 6 (31 aa).

A helical transmembrane segment spans residues 3-23 (ILIGYIILLACAFGLAAGLFF).

Belongs to the PetL family. As to quaternary structure, the 4 large subunits of the cytochrome b6-f complex are cytochrome b6, subunit IV (17 kDa polypeptide, PetD), cytochrome f and the Rieske protein, while the 4 small subunits are PetG, PetL, PetM and PetN. The complex functions as a dimer.

Its subcellular location is the plastid. It localises to the chloroplast thylakoid membrane. Component of the cytochrome b6-f complex, which mediates electron transfer between photosystem II (PSII) and photosystem I (PSI), cyclic electron flow around PSI, and state transitions. PetL is important for photoautotrophic growth as well as for electron transfer efficiency and stability of the cytochrome b6-f complex. The sequence is that of Cytochrome b6-f complex subunit 6 from Rhodomonas salina (Cryptomonas salina).